A 279-amino-acid chain; its full sequence is Lectin 9 (279 aa).

The signal sequence occupies residues Met-1–Ser-23. Residues Asn-116, Asn-139, Asn-235, and Asn-272 are each glycosylated (N-linked (GlcNAc...) asparagine).

It belongs to the leguminous lectin family.

May be involved in arbuscular mycorrhizal (AM) symbiosis with AM fungi. This chain is Lectin 9, found in Medicago truncatula (Barrel medic).